A 197-amino-acid chain; its full sequence is Probable molybdenum cofactor guanylyltransferase (197 aa).

GTP is bound by residues 12–14 (LAG), K24, D71, and D103. A Mg(2+)-binding site is contributed by D103.

It belongs to the MobA family. Mg(2+) serves as cofactor.

The protein localises to the cytoplasm. It catalyses the reaction Mo-molybdopterin + GTP + H(+) = Mo-molybdopterin guanine dinucleotide + diphosphate. In terms of biological role, transfers a GMP moiety from GTP to Mo-molybdopterin (Mo-MPT) cofactor (Moco or molybdenum cofactor) to form Mo-molybdopterin guanine dinucleotide (Mo-MGD) cofactor. The protein is Probable molybdenum cofactor guanylyltransferase of Mycobacterium avium (strain 104).